We begin with the raw amino-acid sequence, 195 residues long: Imidazoleglycerol-phosphate dehydratase (195 aa).

The protein belongs to the imidazoleglycerol-phosphate dehydratase family.

The protein localises to the cytoplasm. It catalyses the reaction D-erythro-1-(imidazol-4-yl)glycerol 3-phosphate = 3-(imidazol-4-yl)-2-oxopropyl phosphate + H2O. Its pathway is amino-acid biosynthesis; L-histidine biosynthesis; L-histidine from 5-phospho-alpha-D-ribose 1-diphosphate: step 6/9. The chain is Imidazoleglycerol-phosphate dehydratase from Burkholderia pseudomallei (strain 1710b).